A 194-amino-acid chain; its full sequence is Holliday junction branch migration complex subunit RuvA (194 aa).

The segment at 1 to 64 (MISSLNGILE…EDALSLFGFA (64 aa)) is domain I. Positions 65 to 143 (TTEELSLFET…KNWEAGVLSQ (79 aa)) are domain II. A flexible linker region spans residues 144-149 (VTEANS). The segment at 149–194 (SDILATLTALGYSSSEAAKAISSLGDNGDLPLEERIKLALNYFNNK) is domain III.

Belongs to the RuvA family. In terms of assembly, homotetramer. Forms an RuvA(8)-RuvB(12)-Holliday junction (HJ) complex. HJ DNA is sandwiched between 2 RuvA tetramers; dsDNA enters through RuvA and exits via RuvB. An RuvB hexamer assembles on each DNA strand where it exits the tetramer. Each RuvB hexamer is contacted by two RuvA subunits (via domain III) on 2 adjacent RuvB subunits; this complex drives branch migration. In the full resolvosome a probable DNA-RuvA(4)-RuvB(12)-RuvC(2) complex forms which resolves the HJ.

It localises to the cytoplasm. Functionally, the RuvA-RuvB-RuvC complex processes Holliday junction (HJ) DNA during genetic recombination and DNA repair, while the RuvA-RuvB complex plays an important role in the rescue of blocked DNA replication forks via replication fork reversal (RFR). RuvA specifically binds to HJ cruciform DNA, conferring on it an open structure. The RuvB hexamer acts as an ATP-dependent pump, pulling dsDNA into and through the RuvAB complex. HJ branch migration allows RuvC to scan DNA until it finds its consensus sequence, where it cleaves and resolves the cruciform DNA. This Dehalococcoides mccartyi (strain CBDB1) protein is Holliday junction branch migration complex subunit RuvA.